The primary structure comprises 745 residues: VCP-like ATPase (745 aa).

ATP is bound by residues G231 to T238 and G508 to T515.

The protein belongs to the AAA ATPase family. CDC48 subfamily. In terms of assembly, homohexamer. Forms a ring-shaped particle.

The sequence is that of VCP-like ATPase (vat) from Thermoplasma acidophilum (strain ATCC 25905 / DSM 1728 / JCM 9062 / NBRC 15155 / AMRC-C165).